The chain runs to 126 residues: uncharacterized protein (126 aa).

This is an uncharacterized protein from Mycoplasmopsis pulmonis (strain UAB CTIP) (Mycoplasma pulmonis).